Here is a 376-residue protein sequence, read N- to C-terminus: Chaperone protein DnaJ (376 aa).

Positions 5-70 constitute a J domain; that stretch reads DYYEVLGVAK…QKRAAYDQYG (66 aa). The CR-type zinc finger occupies 136–214; it reads GYDTQIRVPS…CHGSGKVKET (79 aa). Residues C149, C152, C166, C169, C188, C191, C202, and C205 each coordinate Zn(2+). CXXCXGXG motif repeat units lie at residues 149–156, 166–173, 188–195, and 202–209; these read CGICHGSG, CPTCHGQG, CPKCHGTG, and CVHCHGSG.

Belongs to the DnaJ family. As to quaternary structure, homodimer. Zn(2+) serves as cofactor.

The protein resides in the cytoplasm. Functionally, participates actively in the response to hyperosmotic and heat shock by preventing the aggregation of stress-denatured proteins and by disaggregating proteins, also in an autonomous, DnaK-independent fashion. Unfolded proteins bind initially to DnaJ; upon interaction with the DnaJ-bound protein, DnaK hydrolyzes its bound ATP, resulting in the formation of a stable complex. GrpE releases ADP from DnaK; ATP binding to DnaK triggers the release of the substrate protein, thus completing the reaction cycle. Several rounds of ATP-dependent interactions between DnaJ, DnaK and GrpE are required for fully efficient folding. Also involved, together with DnaK and GrpE, in the DNA replication of plasmids through activation of initiation proteins. The protein is Chaperone protein DnaJ of Burkholderia thailandensis (strain ATCC 700388 / DSM 13276 / CCUG 48851 / CIP 106301 / E264).